Reading from the N-terminus, the 335-residue chain is Urokinase plasminogen activator surface receptor (335 aa).

The N-terminal stretch at 1–22 is a signal peptide; sequence MGHPLLLPLLLLLHTCVPASWG. UPAR/Ly6 domains are found at residues 23–114, 115–213, and 214–305; these read LRCM…RSRY, LECI…PQNG, and HQCY…YRKG. 3 cysteine pairs are disulfide-bonded: C25-C46, C28-C34, and C39-C67. Residue N74 is glycosylated (N-linked (GlcNAc...) asparagine). 11 disulfide bridges follow: C93–C98, C117–C144, C120–C127, C137–C169, C175–C192, C193–C198, C216–C244, C219–C227, C237–C263, C269–C287, and C288–C293. 5 N-linked (GlcNAc...) asparagine glycosylation sites follow: N184, N194, N222, N255, and N284. G305 carries the GPI-anchor amidated glycine lipid modification. Residues 306 to 335 constitute a propeptide, removed in mature form; sequence AAPQPGPAHLSLTITLLMTARLWGGTLLWT.

As to quaternary structure, monomer. Interacts (via the UPAR/Ly6 domains) with SRPX2. Interacts with MRC2. Interacts with FAP (seprase); the interaction occurs at the cell surface of invadopodia membrane. Interacts with SORL1 (via N-terminal ectodomain); this interaction decreases PLAUR internalization. The ternary complex composed of PLAUR-PLAU-SERPINE1 also interacts with SORL1.

The protein resides in the cell membrane. The protein localises to the cell projection. Its subcellular location is the invadopodium membrane. Its function is as follows. Acts as a receptor for urokinase plasminogen activator. Plays a role in localizing and promoting plasmin formation. Mediates the proteolysis-independent signal transduction activation effects of U-PA. It is subject to negative-feedback regulation by U-PA which cleaves it into an inactive form. The polypeptide is Urokinase plasminogen activator surface receptor (PLAUR) (Macaca fascicularis (Crab-eating macaque)).